The primary structure comprises 444 residues: MNAAKVLDDLKRRFPNEPEYHQAVEEVLSTIEEEYNKHPEFDKANLIERLCIPDRVFQFRVTWMDDKGNIQTNMGYRVQHNNAIGPYKGGIRFHASVNLSILKFLAFEQTFKNSLTTLPMGGGKGGSDFSPRGKSNAEVMRFVQAFMLELWRHIGPETDVPAGDIGVGGREVGFMFGMYKKLAHEFTGTFTGKGREFGGSLIRPEATGYGNIYFLMEMLKTKGTDLKGKVCLVSGSGNVAQYTIEKVIELGGKVVTCSDSDGYIYDPDGIDREKLDYIMELKNLYRGRIREYAEKYGCKYVEGAKPWGEKCDIALPSATQNELNGDHARQLVANGCIAVSEGANMPSTPEAVRVFQDAKILYAPGKAANAGGVSVSGLEMTQNSIKLSWSAEEVDEKLKSIMKNIHEACVQYGTEADGYVNYVKGANVAGFMKVAKAMMAQGIV.

Lysine 124 is an active-site residue.

This sequence belongs to the Glu/Leu/Phe/Val dehydrogenases family. Homohexamer.

The catalysed reaction is L-glutamate + NAD(+) + H2O = 2-oxoglutarate + NH4(+) + NADH + H(+). The enzyme catalyses L-glutamate + NADP(+) + H2O = 2-oxoglutarate + NH4(+) + NADPH + H(+). This Bacteroides thetaiotaomicron (strain ATCC 29148 / DSM 2079 / JCM 5827 / CCUG 10774 / NCTC 10582 / VPI-5482 / E50) protein is Glutamate dehydrogenase (gdhA).